The sequence spans 433 residues: MSTSAKHTSAPDSFFSASLEQADPEIAAAIKGELGRQRHEVELIASENIVSRAVLEAQGSVMTNKYAEGYPGARYYGGCEFVDVAENLAIERAKKLFGAGFANVQPNSGSQMNQAVFLALLQPGDTFMGLDLAAGGHLTHGATVNMSGKWFKPVHYTVRREDGIIDMDAVAKLAEETRPKLIIAGGSAYSRAWDFKRFREIADSVGAYFMVDMAHFAGLVAGGAHASPVPHAHVCTTTTHKSLRGPRGGLILTNDEALAKKFNSAIFPGLQGGPLMHVIAAKAVAFKEALQPDFKVYAKNVVENAKALAETLRAAGFDLVSGGTDNHLMLVDLRPKGLKGNVSEKALVRAAITCNKNGIPFDPEKPFVTSGLRLGTPAATTRGFGVAEFQQVGNLIAEVLNAIAQSPDGAAPLVEASVKQRVKELTDRFPIYQ.

(6S)-5,6,7,8-tetrahydrofolate is bound by residues Leu132 and 136–138; that span reads GHL. An N6-(pyridoxal phosphate)lysine modification is found at Lys241.

This sequence belongs to the SHMT family. As to quaternary structure, homodimer. The cofactor is pyridoxal 5'-phosphate.

The protein resides in the cytoplasm. It carries out the reaction (6R)-5,10-methylene-5,6,7,8-tetrahydrofolate + glycine + H2O = (6S)-5,6,7,8-tetrahydrofolate + L-serine. The protein operates within one-carbon metabolism; tetrahydrofolate interconversion. It functions in the pathway amino-acid biosynthesis; glycine biosynthesis; glycine from L-serine: step 1/1. Functionally, catalyzes the reversible interconversion of serine and glycine with tetrahydrofolate (THF) serving as the one-carbon carrier. This reaction serves as the major source of one-carbon groups required for the biosynthesis of purines, thymidylate, methionine, and other important biomolecules. Also exhibits THF-independent aldolase activity toward beta-hydroxyamino acids, producing glycine and aldehydes, via a retro-aldol mechanism. The sequence is that of Serine hydroxymethyltransferase from Rhodopseudomonas palustris (strain HaA2).